Reading from the N-terminus, the 275-residue chain is MNTTHVPEPHRTEQHAENQRHWRKILGIAPIVSIAFPATMYFISDEDSFEDSLFLRFITVLLPFSYSAVQYALLHTNWKSHNKPERILQSILYYTLNLLFLAFSIISILSIIAFTLAEWEDDDWENNNDPIIFSFILPSFTVPLTYLLSTSCCLVPGQIGFTDTGINVLVDILILLCSAGDLVPAFDEVKHCYYFAIISSILILIRLLREKLSPEKQSPPPTAPWRIAVFVLILISIVIAYALLAYLIMNADIFDNYYSSLFDKMKNIFSSKPDE.

This sequence belongs to the UPF0328 family.

This is UPF0328 protein ECU05_0050 from Encephalitozoon cuniculi (strain GB-M1) (Microsporidian parasite).